The chain runs to 47 residues: Rhodotorucin-A peptides type 3 (47 aa).

Positions 1–3 (MVA) are excised as a propeptide. C14 carries S-farnesyl cysteine lipidation. The propeptide occupies 15 to 18 (TVAK). A lipid anchor (S-farnesyl cysteine) is attached at C29. Residues 30–33 (TVSK) constitute a propeptide that is removed on maturation. C44 carries the S-farnesyl cysteine lipid modification. Positions 45 to 47 (TVA) are excised as a propeptide.

The protein resides in the cell membrane. In terms of biological role, rhodotorucin-A is a mating pheromone in cells of mating type A of Rhodosporidium toruloides. This is Rhodotorucin-A peptides type 3 (RHA3) from Rhodotorula toruloides (Yeast).